The sequence spans 443 residues: Thymidine phosphorylase (443 aa).

This sequence belongs to the thymidine/pyrimidine-nucleoside phosphorylase family. In terms of assembly, homodimer.

The enzyme catalyses thymidine + phosphate = 2-deoxy-alpha-D-ribose 1-phosphate + thymine. It functions in the pathway pyrimidine metabolism; dTMP biosynthesis via salvage pathway; dTMP from thymine: step 1/2. Functionally, the enzymes which catalyze the reversible phosphorolysis of pyrimidine nucleosides are involved in the degradation of these compounds and in their utilization as carbon and energy sources, or in the rescue of pyrimidine bases for nucleotide synthesis. The chain is Thymidine phosphorylase from Shewanella denitrificans (strain OS217 / ATCC BAA-1090 / DSM 15013).